Here is a 269-residue protein sequence, read N- to C-terminus: Sulfur carrier protein FdhD (269 aa).

The active-site Cysteine persulfide intermediate is the Cys111.

It belongs to the FdhD family.

It is found in the cytoplasm. Required for formate dehydrogenase (FDH) activity. Acts as a sulfur carrier protein that transfers sulfur from IscS to the molybdenum cofactor prior to its insertion into FDH. This Brucella melitensis biotype 1 (strain ATCC 23456 / CCUG 17765 / NCTC 10094 / 16M) protein is Sulfur carrier protein FdhD.